A 1000-amino-acid polypeptide reads, in one-letter code: uncharacterized protein (1000 aa).

Basic and acidic residues predominate over residues 787–809; that stretch reads RQYEKLKRQRAKSETERHQERHG. The disordered stretch occupies residues 787–812; that stretch reads RQYEKLKRQRAKSETERHQERHGKLS.

This is an uncharacterized protein from Picosynechococcus sp. (strain ATCC 27264 / PCC 7002 / PR-6) (Agmenellum quadruplicatum).